A 381-amino-acid polypeptide reads, in one-letter code: Alkanesulfonate monooxygenase (381 aa).

This sequence belongs to the SsuD family. In terms of assembly, homotetramer.

The catalysed reaction is an alkanesulfonate + FMNH2 + O2 = an aldehyde + FMN + sulfite + H2O + 2 H(+). Catalyzes the desulfonation of aliphatic sulfonates. The sequence is that of Alkanesulfonate monooxygenase from Escherichia fergusonii (strain ATCC 35469 / DSM 13698 / CCUG 18766 / IAM 14443 / JCM 21226 / LMG 7866 / NBRC 102419 / NCTC 12128 / CDC 0568-73).